The chain runs to 62 residues: Dual specificity mitogen-activated protein kinase kinase 3 (62 aa).

The region spanning Gly1–Lys62 is the Protein kinase domain.

It belongs to the protein kinase superfamily. STE Ser/Thr protein kinase family. MAP kinase kinase subfamily. In terms of processing, activated by phosphorylation on Ser/Thr catalyzed by MAP kinase kinase kinases.

It carries out the reaction L-seryl-[protein] + ATP = O-phospho-L-seryl-[protein] + ADP + H(+). The catalysed reaction is L-threonyl-[protein] + ATP = O-phospho-L-threonyl-[protein] + ADP + H(+). The enzyme catalyses L-tyrosyl-[protein] + ATP = O-phospho-L-tyrosyl-[protein] + ADP + H(+). Catalyzes the concomitant phosphorylation of a threonine and a tyrosine residue in a Thr-Glu-Tyr sequence located in MAP kinases. This chain is Dual specificity mitogen-activated protein kinase kinase 3 (map2k3), found in Xenopus laevis (African clawed frog).